Reading from the N-terminus, the 563-residue chain is Arginine--tRNA ligase (563 aa).

The 'HIGH' region motif lies at 121–131; that stretch reads PNIAKPFSIGH.

The protein belongs to the class-I aminoacyl-tRNA synthetase family. In terms of assembly, monomer.

The protein localises to the cytoplasm. It carries out the reaction tRNA(Arg) + L-arginine + ATP = L-arginyl-tRNA(Arg) + AMP + diphosphate. This is Arginine--tRNA ligase from Streptococcus agalactiae serotype Ia (strain ATCC 27591 / A909 / CDC SS700).